Consider the following 234-residue polypeptide: Large ribosomal subunit protein uL1 (234 aa).

This sequence belongs to the universal ribosomal protein uL1 family. As to quaternary structure, part of the 50S ribosomal subunit.

In terms of biological role, binds directly to 23S rRNA. The L1 stalk is quite mobile in the ribosome, and is involved in E site tRNA release. Its function is as follows. Protein L1 is also a translational repressor protein, it controls the translation of the L11 operon by binding to its mRNA. The polypeptide is Large ribosomal subunit protein uL1 (Aliivibrio fischeri (strain MJ11) (Vibrio fischeri)).